We begin with the raw amino-acid sequence, 322 residues long: Phosphatidylserine decarboxylase proenzyme (322 aa).

Active-site charge relay system; for autoendoproteolytic cleavage activity residues include Asp90, His147, and Ser254. The active-site Schiff-base intermediate with substrate; via pyruvic acid; for decarboxylase activity is the Ser254. Position 254 is a pyruvic acid (Ser); by autocatalysis (Ser254). The interval 293-322 (PDAEPAPLPAEEIEAEHDASPLVDDKKDQV) is disordered. Residues 308–322 (EHDASPLVDDKKDQV) show a composition bias toward basic and acidic residues.

Belongs to the phosphatidylserine decarboxylase family. PSD-B subfamily. Prokaryotic type I sub-subfamily. As to quaternary structure, heterodimer of a large membrane-associated beta subunit and a small pyruvoyl-containing alpha subunit. Requires pyruvate as cofactor. Post-translationally, is synthesized initially as an inactive proenzyme. Formation of the active enzyme involves a self-maturation process in which the active site pyruvoyl group is generated from an internal serine residue via an autocatalytic post-translational modification. Two non-identical subunits are generated from the proenzyme in this reaction, and the pyruvate is formed at the N-terminus of the alpha chain, which is derived from the carboxyl end of the proenzyme. The autoendoproteolytic cleavage occurs by a canonical serine protease mechanism, in which the side chain hydroxyl group of the serine supplies its oxygen atom to form the C-terminus of the beta chain, while the remainder of the serine residue undergoes an oxidative deamination to produce ammonia and the pyruvoyl prosthetic group on the alpha chain. During this reaction, the Ser that is part of the protease active site of the proenzyme becomes the pyruvoyl prosthetic group, which constitutes an essential element of the active site of the mature decarboxylase.

It is found in the cell membrane. It catalyses the reaction a 1,2-diacyl-sn-glycero-3-phospho-L-serine + H(+) = a 1,2-diacyl-sn-glycero-3-phosphoethanolamine + CO2. The protein operates within phospholipid metabolism; phosphatidylethanolamine biosynthesis; phosphatidylethanolamine from CDP-diacylglycerol: step 2/2. Catalyzes the formation of phosphatidylethanolamine (PtdEtn) from phosphatidylserine (PtdSer). The sequence is that of Phosphatidylserine decarboxylase proenzyme from Escherichia coli (strain 55989 / EAEC).